The primary structure comprises 706 residues: D-(-)-3-hydroxybutyrate oligomer hydrolase (706 aa).

The N-terminal stretch at 1-32 (MTTTSKNCLTLTSIAAAVAAVLVLSACGGGSA) is a signal peptide. Serine 311 serves as the catalytic Charge relay system.

This sequence belongs to the D-(-)-3-hydroxybutyrate oligomer hydrolase family.

The protein localises to the secreted. It carries out the reaction (3R)-hydroxybutanoate dimer + H2O = 2 (R)-3-hydroxybutanoate + H(+). Its pathway is lipid metabolism; butanoate metabolism. Functionally, participates in the degradation of poly-3-hydroxybutyrate (PHB). It works downstream of poly(3-hydroxybutyrate) depolymerase, hydrolyzing D(-)-3-hydroxybutyrate oligomers of various length (3HB-oligomers) into 3HB-monomers. The protein is D-(-)-3-hydroxybutyrate oligomer hydrolase of Polaromonas sp. (strain JS666 / ATCC BAA-500).